Here is a 63-residue protein sequence, read N- to C-terminus: Keratin-associated protein 19-8 (63 aa).

Belongs to the KRTAP type 19 family. As to quaternary structure, interacts with hair keratins.

In terms of biological role, in the hair cortex, hair keratin intermediate filaments are embedded in an interfilamentous matrix, consisting of hair keratin-associated proteins (KRTAP), which are essential for the formation of a rigid and resistant hair shaft through their extensive disulfide bond cross-linking with abundant cysteine residues of hair keratins. The matrix proteins include the high-sulfur and high-glycine-tyrosine keratins. This is Keratin-associated protein 19-8 (KRTAP19-8) from Homo sapiens (Human).